The chain runs to 250 residues: Mycofactocin precursor peptide peptidase (250 aa).

Residues glutamate 38, histidine 40, aspartate 49, histidine 127, and glutamate 166 each contribute to the a divalent metal cation site.

It belongs to the creatininase superfamily. Homooctamer. It depends on Fe(2+) as a cofactor. Zn(2+) is required as a cofactor.

The catalysed reaction is [mycofactocin precursor peptide]-C-terminal glycyl-N-{5-[(4-hydroxyphenyl)methyl]-4,4-dimethyl-2-oxopyrrolidin-3-yl}acetamide + H2O = [mycofactocin precursor peptide]-C-terminal glycine + 3-amino-5-[(4-hydroxyphenyl)methyl]-4,4-dimethyl-2-pyrrolidin-2-one. Its function is as follows. Peptidase involved in the biosynthesis of the enzyme cofactor mycofactocin (MFT). Catalyzes cleavage of the MftC-modified MftA peptide to liberate its final two residues, which consist of a cross-linked valine-decarboxylated tyrosine dipeptide (named 3-amino-5-[(4-hydroxyphenyl)methyl]-4,4-dimethyl-2-pyrrolidin-2-one or ADHP). In Mycobacterium ulcerans (strain Agy99), this protein is Mycofactocin precursor peptide peptidase.